The following is a 335-amino-acid chain: Peflin (335 aa).

The segment covering 23–37 (AMEETRREFEKEKQR) has biased composition (basic and acidic residues). Residues 23–92 (AMEETRREFE…SPRHTKTPVD (70 aa)) form a disordered region. Polar residues predominate over residues 43–53 (VTQAQTPNTRV). 5 consecutive EF-hand domains span residues 144 to 192 (KVAP…DDNS), 198 to 223 (SVDALINLFGASRFGTVNQAEFIALY), 224 to 259 (KRVKSWRKVYVDNDINGSLTISVSEFHNSLQELGYL), 260 to 300 (IPFE…LMRL), and 301 to 332 (TKLFRKFDTNQEGIATIQYKDFIDATLYLGRF). Ca(2+) is bound by residues D170, R176, and E181. Ca(2+)-binding residues include D237, N239, S241, T243, and E248.

Homodimer.

Its subcellular location is the cytoplasm. It localises to the nucleus. The protein resides in the bud tip. It is found in the bud neck. Functionally, calcium-binding protein that is required for polar bud growth and cell wall abscission. Can also bind zinc ions. The sequence is that of Peflin (PEF1) from Saccharomyces cerevisiae (strain ATCC 204508 / S288c) (Baker's yeast).